A 319-amino-acid chain; its full sequence is Acetyl-coenzyme A carboxylase carboxyl transferase subunit alpha (319 aa).

The region spanning 35–296 (NIDEEVHRLR…KAQLLADLAD (262 aa)) is the CoA carboxyltransferase C-terminal domain.

This sequence belongs to the AccA family. As to quaternary structure, acetyl-CoA carboxylase is a heterohexamer composed of biotin carboxyl carrier protein (AccB), biotin carboxylase (AccC) and two subunits each of ACCase subunit alpha (AccA) and ACCase subunit beta (AccD).

The protein localises to the cytoplasm. It carries out the reaction N(6)-carboxybiotinyl-L-lysyl-[protein] + acetyl-CoA = N(6)-biotinyl-L-lysyl-[protein] + malonyl-CoA. The protein operates within lipid metabolism; malonyl-CoA biosynthesis; malonyl-CoA from acetyl-CoA: step 1/1. Functionally, component of the acetyl coenzyme A carboxylase (ACC) complex. First, biotin carboxylase catalyzes the carboxylation of biotin on its carrier protein (BCCP) and then the CO(2) group is transferred by the carboxyltransferase to acetyl-CoA to form malonyl-CoA. The sequence is that of Acetyl-coenzyme A carboxylase carboxyl transferase subunit alpha from Klebsiella pneumoniae (strain 342).